Consider the following 361-residue polypeptide: Large ribosomal subunit protein mL45 (361 aa).

The interval 319–361 is disordered; that stretch reads EPPKELSAGDAEVKQVDSVGEQSKEQLPLATPVESHTKPSLAI.

The protein belongs to the mitochondrion-specific ribosomal protein mL45 family.

It localises to the mitochondrion. This Drosophila melanogaster (Fruit fly) protein is Large ribosomal subunit protein mL45 (mRpL45).